The primary structure comprises 244 residues: U11/U12 small nuclear ribonucleoprotein 35 kDa protein (244 aa).

The region spanning 51 to 129 is the RRM domain; sequence LTLFVARLNL…HEIFVDYELE (79 aa). The span at 146-162 shows a compositional bias: basic and acidic residues; the sequence is GKKESGQLRFGGRDRPF. Residues 146-244 form a disordered region; the sequence is GKKESGQLRF…KSRDKRDRSK (99 aa). Lysine 172 participates in a covalent cross-link: Glycyl lysine isopeptide (Lys-Gly) (interchain with G-Cter in SUMO2). 2 stretches are compositionally biased toward basic and acidic residues: residues 173–185 and 192–244; these read NEPH…ERRE and RHWD…DRSK.

Component of the U11/U12 snRNPs that are part of the U12-type spliceosome.

The protein localises to the nucleus. The protein is U11/U12 small nuclear ribonucleoprotein 35 kDa protein (Snrnp35) of Mus musculus (Mouse).